The chain runs to 137 residues: Small ribosomal subunit protein bS6 (137 aa).

It belongs to the bacterial ribosomal protein bS6 family.

Binds together with bS18 to 16S ribosomal RNA. This is Small ribosomal subunit protein bS6 from Mycoplasma mycoides subsp. mycoides SC (strain CCUG 32753 / NCTC 10114 / PG1).